We begin with the raw amino-acid sequence, 421 residues long: 2-deoxystreptamine N-acetyl-D-glucosaminyltransferase (421 aa).

Belongs to the glycosyltransferase group 1 family. Glycosyltransferase 4 subfamily.

It carries out the reaction 2-deoxystreptamine + UDP-N-acetyl-alpha-D-glucosamine = 2'-N-acetylparomamine + UDP + H(+). It functions in the pathway antibiotic biosynthesis; neomycin biosynthesis. In terms of biological role, glycosyltransferase involved in the biosynthesis of neomycin by mediating conversion of 2-deoxystreptamine (2-DOS) to 2'-N-acetylparomamine using UDP-alpha-D-glucosamine as sugar donor. This chain is 2-deoxystreptamine N-acetyl-D-glucosaminyltransferase (neoD), found in Streptomyces fradiae (Streptomyces roseoflavus).